A 79-amino-acid chain; its full sequence is CATR tumorigenic conversion 1 protein (79 aa).

This chain is CATR tumorigenic conversion 1 protein (CATR1), found in Homo sapiens (Human).